The chain runs to 307 residues: Farnesol kinase, chloroplastic (307 aa).

The N-terminal 65 residues, 1 to 65 (MATTSTTTKL…TKIRKSSLAA (65 aa)), are a transit peptide targeting the chloroplast. A run of 7 helical transmembrane segments spans residues 77 to 97 (VCAF…WGEI), 116 to 136 (IGLV…GALF), 137 to 157 (ASLV…GVYH), 177 to 194 (GPLY…YYWK), 197 to 217 (PIAI…DIVG), 237 to 257 (IGMA…FASF), and 265 to 285 (GMIL…SLPI).

It belongs to the polyprenol kinase family.

It is found in the plastid. It localises to the chloroplast membrane. It carries out the reaction (2E,6E)-farnesol + CTP = (2E,6E)-farnesyl phosphate + CDP + H(+). The enzyme catalyses (2E,6E)-farnesol + ATP = (2E,6E)-farnesyl phosphate + ADP + H(+). It catalyses the reaction (2E)-geraniol + ATP = (2E)-geranyl phosphate + ADP + H(+). The catalysed reaction is (2E,6E,10E)-geranylgeraniol + ATP = (2E,6E,10E)-geranylgeranyl phosphate + ADP + H(+). In terms of biological role, kinase involved in negative regulation of abscisic acid (ABA) signaling. Substrate preference is farnesol &gt; geraniol &gt; geranylgeraniol, but has no activity with farnesyl phosphate. Can use CTP &gt; ATP &gt; GTP = UTP as phosphoryl donor. The protein is Farnesol kinase, chloroplastic of Arabidopsis thaliana (Mouse-ear cress).